Reading from the N-terminus, the 645-residue chain is Translation factor GUF1, mitochondrial (645 aa).

A tr-type G domain is found at 44-228 (ENYRNFSIVA…AIIDRIPPPT (185 aa)). Residues 53 to 60 (AHVDHGKS), 120 to 124 (DTPGH), and 174 to 177 (NKID) each bind GTP.

It belongs to the TRAFAC class translation factor GTPase superfamily. Classic translation factor GTPase family. LepA subfamily.

It localises to the mitochondrion inner membrane. The catalysed reaction is GTP + H2O = GDP + phosphate + H(+). Promotes mitochondrial protein synthesis. May act as a fidelity factor of the translation reaction, by catalyzing a one-codon backward translocation of tRNAs on improperly translocated ribosomes. Binds to mitochondrial ribosomes in a GTP-dependent manner. The sequence is that of Translation factor GUF1, mitochondrial from Saccharomyces cerevisiae (strain RM11-1a) (Baker's yeast).